The chain runs to 492 residues: MGGRRGPNRTSYYRNPLCEPGSSGASGGGHSSSASVSSVRSRSRTTSGTGLSSPPLAAQTVVPLQHCKIPELPVQASILFELQLFFCQLIALFVHYINIYKTVWWYPPSHPPSHTSLNFHLIDFNLLMVTTIVLGRRFIGSIVKEASQRGKVSLFRSILLFLTRFTVLTATGWSLCRSLIHLFRTYSFLNLLFLCYPFGMYIPFLQLNYDLRKTNLFSHVASMGPREAVSGLARSRDYFLTLRETWKQHTRQLYGPEAMPTHACCLSPSLIRNEVEFLKMDFNWRMKEVLVSSMLSAYYVAFVPVWFVKNTHYYDKRWSCELFLLVSISTSVILMQHLLPASYCDLLHKAAAHLGCWQKVDPALCSNVLQHPWTEECMWPQGVLVKHSKNVYKALGHYNVAIPSDVSHFRFHFFFSNPLRILNILLLLEGAVIVYQLYSLMSSEKWHQTISLALILFSNYYAFFKLLRDRLVLGKAYSYSASPQRDLDHRFS.

The segment at 1 to 53 is disordered; it reads MGGRRGPNRTSYYRNPLCEPGSSGASGGGHSSSASVSSVRSRSRTTSGTGLSS. An N-linked (GlcNAc...) asparagine glycan is attached at Asn-8. A compositionally biased stretch (low complexity) spans 31 to 53; that stretch reads SSSASVSSVRSRSRTTSGTGLSS. A run of 8 helical transmembrane segments spans residues 77–97, 115–135, 153–175, 185–205, 288–308, 322–342, 421–441, and 447–467; these read SILFELQLFFCQLIALFVHYI, TSLNFHLIDFNLLMVTTIVLG, SLFRSILLFLTRFTVLTATGWSL, TYSFLNLLFLCYPFGMYIPFL, EVLVSSMLSAYYVAFVPVWFV, LFLLVSISTSVILMQHLLPAS, ILNILLLLEGAVIVYQLYSLM, and HQTISLALILFSNYYAFFKLL.

The protein belongs to the TMEM39 family.

Its subcellular location is the endoplasmic reticulum membrane. In terms of biological role, may protect the cells against DNA damage caused by exposure to the cold-warming stress and facilitates tissue damage repair during the recovery phase. The polypeptide is Transmembrane protein 39B (Rattus norvegicus (Rat)).